The following is a 180-amino-acid chain: UPF0227 protein YcfP (180 aa).

Belongs to the UPF0227 family.

The polypeptide is UPF0227 protein YcfP (Salmonella arizonae (strain ATCC BAA-731 / CDC346-86 / RSK2980)).